The chain runs to 158 residues: N-alpha-acetyltransferase RimI (158 aa).

Residues 8-155 (VTIGALTRAD…DAYTMRRDSG (148 aa)) form the N-acetyltransferase domain.

This sequence belongs to the acetyltransferase family. RimI subfamily. As to quaternary structure, monomer. Interacts with TsaD. Interacts with GroS/GroES.

It carries out the reaction N-terminal L-methionyl-L-alanyl-[protein] + acetyl-CoA = N-terminal N(alpha)-acetyl-L-methionyl-L-alanyl-[protein] + CoA + H(+). It catalyses the reaction N-terminal L-methionyl-L-seryl-[protein] + acetyl-CoA = N-terminal N(alpha)-acetyl-L-methionyl-L-seryl-[protein] + CoA + H(+). The enzyme catalyses N-terminal L-methionyl-L-valyl-[protein] + acetyl-CoA = N-terminal N(alpha)-acetyl-L-methionyl-L-valyl-[protein] + CoA + H(+). The catalysed reaction is N-terminal L-methionyl-L-threonyl-[protein] + acetyl-CoA = N-terminal N(alpha)-acetyl-L-methionyl-L-threonyl-[protein] + CoA + H(+). It carries out the reaction N-terminal L-methionyl-L-lysyl-[protein] + acetyl-CoA = N-terminal N(alpha)-acetyl-L-methionyl-L-lysyl-[protein] + CoA + H(+). It catalyses the reaction N-terminal L-methionyl-L-leucyl-[protein] + acetyl-CoA = N-terminal N(alpha)-acetyl-L-methionyl-L-leucyl-[protein] + CoA + H(+). The enzyme catalyses N-terminal L-methionyl-L-phenylalanyl-[protein] + acetyl-CoA = N-terminal N(alpha)-acetyl-L-methionyl-L-phenylalanyl-[protein] + CoA + H(+). The catalysed reaction is N-terminal L-methionyl-L-tyrosyl-[protein] + acetyl-CoA = N-terminal N(alpha)-acetyl-L-methionyl-L-tyrosyl-[protein] + CoA + H(+). It carries out the reaction N-terminal glycyl-[protein] + acetyl-CoA = N-terminal N(alpha)-acetylglycyl-[protein] + CoA + H(+). It catalyses the reaction N-terminal L-alanyl-[protein] + acetyl-CoA = N-terminal N(alpha)-acetyl-L-alanyl-[protein] + CoA + H(+). The enzyme catalyses N-terminal L-seryl-[protein] + acetyl-CoA = N-terminal N(alpha)-acetyl-L-seryl-[protein] + CoA + H(+). The catalysed reaction is N-terminal L-valyl-[protein] + acetyl-CoA = N-terminal N(alpha)-acetyl-L-valyl-[protein] + CoA + H(+). It carries out the reaction N-terminal L-cysteinyl-[protein] + acetyl-CoA = N-terminal N(alpha)-acetyl-L-cysteinyl-[protein] + CoA + H(+). It catalyses the reaction N-terminal L-threonyl-[protein] + acetyl-CoA = N-terminal N(alpha)-acetyl-L-threonyl-[protein] + CoA + H(+). N-alpha-acetyltransferase that specifically mediates the acetylation of N-terminal residues. Able to mediate acetylation of a wide variety of N-terminal residues, with preference for hydrophobic N-termini. Acetylates GroS/GroES and GroEL1. Able to acetylate the ribosomal protein bS18, but it is unclear whether it acetylates its N-terminal alanine residue. The protein is N-alpha-acetyltransferase RimI of Mycobacterium tuberculosis (strain ATCC 25618 / H37Rv).